The sequence spans 32 residues: Hemocyanin C chain (32 aa).

The protein belongs to the tyrosinase family. Hemocyanin subfamily. As to expression, hemolymph.

It is found in the secreted. The protein resides in the extracellular space. Hemocyanins are copper-containing oxygen carriers occurring freely dissolved in the hemolymph of many mollusks and arthropods. This is Hemocyanin C chain from Cherax destructor (Common yabby crayfish).